The chain runs to 176 residues: Nucleoside triphosphate/diphosphate phosphatase (176 aa).

The active-site Proton donor is arginine 23. Residues asparagine 87, aspartate 103, aspartate 105, aspartate 107, aspartate 120, and glutamate 123 each coordinate Mg(2+).

The protein belongs to the Ntdp family. Mg(2+) is required as a cofactor.

It catalyses the reaction a ribonucleoside 5'-triphosphate + H2O = a ribonucleoside 5'-diphosphate + phosphate + H(+). It carries out the reaction a ribonucleoside 5'-diphosphate + H2O = a ribonucleoside 5'-phosphate + phosphate + H(+). Has nucleoside phosphatase activity towards nucleoside triphosphates and nucleoside diphosphates. The polypeptide is Nucleoside triphosphate/diphosphate phosphatase (Bacillus cereus (strain B4264)).